The primary structure comprises 473 residues: BPI fold-containing family B member 3 (473 aa).

The N-terminal stretch at 1–20 (MMLGVYTLLLLWGLATPCLG) is a signal peptide. The N-linked (GlcNAc...) asparagine glycan is linked to asparagine 139. Residues cysteine 161 and cysteine 196 are joined by a disulfide bond.

It belongs to the BPI/LBP/Plunc superfamily. BPI/LBP family.

Its subcellular location is the secreted. May have the capacity to recognize and bind specific classes of odorants. May act as a carrier molecule, transporting odorants across the mucus layer to access receptor sites. May serve as a primary defense mechanism by recognizing and removing potentially harmful odorants or pathogenic microorganisms from the mucosa or clearing excess odorant from mucus to enable new odorant stimuli to be received. The protein is BPI fold-containing family B member 3 of Mus musculus (Mouse).